Here is a 339-residue protein sequence, read N- to C-terminus: D-erythrose-4-phosphate dehydrogenase (339 aa).

Residues 12 to 13 and Arg-81 each bind NAD(+); that span reads RI. Substrate contacts are provided by residues 154–156, Arg-200, 213–214, and Arg-236; these read SCT and TR. Cys-155 (nucleophile) is an active-site residue. NAD(+) is bound at residue Asn-318.

The protein belongs to the glyceraldehyde-3-phosphate dehydrogenase family. Epd subfamily. Homotetramer.

It is found in the cytoplasm. The catalysed reaction is D-erythrose 4-phosphate + NAD(+) + H2O = 4-phospho-D-erythronate + NADH + 2 H(+). Its pathway is cofactor biosynthesis; pyridoxine 5'-phosphate biosynthesis; pyridoxine 5'-phosphate from D-erythrose 4-phosphate: step 1/5. Catalyzes the NAD-dependent conversion of D-erythrose 4-phosphate to 4-phosphoerythronate. The chain is D-erythrose-4-phosphate dehydrogenase from Cronobacter sakazakii (strain ATCC BAA-894) (Enterobacter sakazakii).